Reading from the N-terminus, the 267-residue chain is Acyl-[acyl-carrier-protein]--UDP-N-acetylglucosamine O-acyltransferase (267 aa).

The protein belongs to the transferase hexapeptide repeat family. LpxA subfamily. In terms of assembly, homotrimer.

It localises to the cytoplasm. It catalyses the reaction a (3R)-hydroxyacyl-[ACP] + UDP-N-acetyl-alpha-D-glucosamine = a UDP-3-O-[(3R)-3-hydroxyacyl]-N-acetyl-alpha-D-glucosamine + holo-[ACP]. It participates in glycolipid biosynthesis; lipid IV(A) biosynthesis; lipid IV(A) from (3R)-3-hydroxytetradecanoyl-[acyl-carrier-protein] and UDP-N-acetyl-alpha-D-glucosamine: step 1/6. Functionally, involved in the biosynthesis of lipid A, a phosphorylated glycolipid that anchors the lipopolysaccharide to the outer membrane of the cell. The chain is Acyl-[acyl-carrier-protein]--UDP-N-acetylglucosamine O-acyltransferase from Cupriavidus metallidurans (strain ATCC 43123 / DSM 2839 / NBRC 102507 / CH34) (Ralstonia metallidurans).